A 99-amino-acid polypeptide reads, in one-letter code: Small integral membrane protein 14 (99 aa).

Residues 1–49 are Lumenal-facing; the sequence is MAEGGFDPCECVCSHEHAMRRLINLLRQSQSYCTDTECLQELPGPSSDN. A helical transmembrane segment spans residues 50 to 70; that stretch reads GISITMILMAWMVIAVILFLL. Residues 71-99 are Cytoplasmic-facing; sequence RPPNLRGSNLTGKPASPHNGQDPPAPPVD. Positions 78–99 are disordered; that stretch reads SNLTGKPASPHNGQDPPAPPVD.

The protein localises to the endoplasmic reticulum membrane. This Bos taurus (Bovine) protein is Small integral membrane protein 14 (SMIM14).